Reading from the N-terminus, the 507-residue chain is F-box only protein 31 (507 aa).

Positions 19–42 are disordered; it reads RQQRRGPAETAAADSEADTDPEEE. S33 bears the Phosphoserine mark. Residues 33-42 are compositionally biased toward acidic residues; the sequence is SEADTDPEEE. Phosphothreonine is present on T37. The short motif at 50–55 is the D box element; sequence RCSLLE. The 47-residue stretch at 50-96 folds into the F-box domain; it reads RCSLLELPPELLVEIFASLPGTDLPSLAQVCSRFRRILHTDTIWRRR. Positions 192, 200, 216, and 222 each coordinate Zn(2+). Position 264 is a phosphoserine; by ATM (S264). The short motif at 283–285 is the DDL motif element; the sequence is DDL. The segment at 364 to 421 is disordered; that stretch reads RQEQEAGEGPAPHREPAVKDPEGPPAKASKEAGPGAEAAEQSSTSGQGQPFVLPAGVS. Positions 374-385 are enriched in basic and acidic residues; sequence APHREPAVKDPE. S448 is subject to Phosphoserine.

The protein belongs to the FBXO31 family. As to quaternary structure, part of a SCF (SKP1-cullin-F-box) protein ligase complex SCF(FBXO31) composed of CUL1, SKP1, RBX1 and FBXO31. Interacts (when phosphorylated at Ser-33) with CDC20, promoting ubiquitination by the APC/C complex. In terms of processing, phosphorylation at Ser-264 by ATM following gamma-irradiation results in its stabilization. Phosphorylation at Ser-448 in absence of stress promotes its ubiquitination and degradation by the SCF(FBXO46) complex. Phosphorylation at Ser-33 by AKT1 promotes association with CDC20 and ubiquitination by the APC/C complex. Post-translationally, ubiquitinated by the SCF(FBXO46) complex in absence of stress, promoting its degradation. Ubiquitinated by the APC/C complex following phosphorylation at Ser-33, leading to its degradation by the proteasome.

The protein resides in the cytoplasm. It is found in the cytoskeleton. It localises to the microtubule organizing center. Its subcellular location is the centrosome. Its pathway is protein modification; protein ubiquitination. Substrate-recognition component of the SCF(FBXO31) protein ligase complex, which specifically mediates the ubiquitination of proteins amidated at their C-terminus in response to oxidative stress, leading to their degradation by the proteasome. FBXO31 specifically recognizes and binds C-terminal peptides bearing an amide: C-terminal amidation in response to oxidative stress takes place following protein fragmentation. The SCF(FBXO31) also plays a role in G1 arrest following DNA damage by mediating ubiquitination of phosphorylated cyclin-D1 (CCND1), promoting its degradation by the proteasome, resulting in G1 arrest. The SCF(FBXO31) complex is however not a major regulator of CCND1 stability during the G1/S transition. In response to genotoxic stress, the SCF(FBXO31) complex directs ubiquitination and degradation of phosphorylated MDM2, thereby promoting p53/TP53-mediated DNA damage response. SCF(FBXO31) complex is required for genomic integrity by catalyzing ubiquitination and degradation of cyclin-A (CCNA1 and/or CCNA2) during the G1 phase. In response to genotoxic stress, the SCF(FBXO31) complex directs ubiquitination and degradation of phosphorylated FBXO46 and MAP2K6. SCF(FBXO31) complex promotes ubiquitination and degradation of CDT1 during the G2 phase to prevent re-replication. The SCF(FBXO31) complex also mediates ubiquitination and degradation of DUSP6, OGT and PARD6A. The polypeptide is F-box only protein 31 (Rattus norvegicus (Rat)).